Reading from the N-terminus, the 201-residue chain is Ras-related protein Rab-35 (201 aa).

Residues Gly18, Val19, Gly20, Lys21, Ser22, Ser23, Ser34, Gly35, Tyr37, Thr39, and Thr40 each coordinate GTP. Ser22 is a binding site for Mg(2+). A Switch 1 motif is present at residues 30–42; it reads DNTFSGSYITTIG. The Mg(2+) site is built by Thr40 and Asp63. The Switch 2 motif lies at 64–80; that stretch reads TAGQERFRTITSTYYRG. Gly66 serves as a coordination point for GTP. Thr72 is modified (phosphothreonine; by LRRK2). Position 75 is an O-(2-cholinephosphoryl)serine (Ser75). Tyr77 carries the post-translational modification O-AMP-tyrosine. Asn120, Lys121, Asp123, Ala151, and Lys152 together coordinate GTP. 2 S-geranylgeranyl cysteine lipidation sites follow: Cys200 and Cys201.

Belongs to the small GTPase superfamily. Rab family. Interacts with DENND1A and DENND1B; in a nucleotide-dependent manner. Interacts with DENND1C; weak interaction which is nucleotide-independent. Interacts (GTP-bound form) with ACAP2, RUSC2, OCRL MICAL1 and MICALL1; the interaction is direct and probably recruits these effectors to membranes. Interacts with EHD1; the interaction is indirect through MICALL1 and probably recruits EHD1 to membranes. Interacts with GDI1, GDI2, CHM and CHML; phosphorylation at Thr-72 by LRRK2 disrupts these interactions. Requires Mg(2+) as cofactor. Post-translationally, phosphorylation at Thr-72 by LRRK2 prevents the association of regulatory proteins including CHM, CHML and GDP dissociation inhibitors GDI1 and GDI2. AMPylation at Tyr-77 by L.pneumophila DrrA occurs in the switch 2 region and leads to moderate inactivation of the GTPase activity. It appears to prolong the lifetime of the GTP state of RAB1B by restricting access of GTPase effectors to switch 2 and blocking effector-stimulated GTP hydrolysis, thereby rendering RAB35 constitutively active. In terms of processing, phosphocholinated by L.pneumophila AnkX. Both GDP-bound and GTP-bound forms can be phosphocholinated. Phosphocholination inhibits the GEF activity of DENND1A.

Its subcellular location is the cell membrane. The protein localises to the membrane. The protein resides in the clathrin-coated pit. It is found in the cytoplasmic vesicle. It localises to the clathrin-coated vesicle. Its subcellular location is the endosome. The protein localises to the melanosome. It catalyses the reaction GTP + H2O = GDP + phosphate + H(+). Regulated by guanine nucleotide exchange factors (GEFs) including DENND1A, DENND1B and DENND1C which promote the exchange of bound GDP for free GTP. Regulated by GTPase activating proteins (GAPs) including TBC1D10 and TBC1D13 which increase GTP hydrolysis activity. Inhibited by GDP dissociation inhibitors (GDIs) which prevent Rab-GDP dissociation. The small GTPases Rab are key regulators of intracellular membrane trafficking, from the formation of transport vesicles to their fusion with membranes. Rabs cycle between an inactive GDP-bound form and an active GTP-bound form that is able to recruit to membranes different sets of downstream effectors directly responsible for vesicle formation, movement, tethering and fusion. RAB35 is involved in the process of endocytosis and is an essential rate-limiting regulator of the fast recycling pathway back to the plasma membrane. During cytokinesis, required for the postfurrowing terminal steps, namely for intercellular bridge stability and abscission, possibly by controlling phosphatidylinositol 4,5-bis phosphate (PIP2) and SEPT2 localization at the intercellular bridge. May indirectly regulate neurite outgrowth. Together with TBC1D13 may be involved in regulation of insulin-induced glucose transporter SLC2A4/GLUT4 translocation to the plasma membrane in adipocytes. In Homo sapiens (Human), this protein is Ras-related protein Rab-35.